A 212-amino-acid polypeptide reads, in one-letter code: ATP-dependent dethiobiotin synthetase BioD (212 aa).

10–15 provides a ligand contact to ATP; the sequence is GVGKTF. Residue T14 participates in Mg(2+) binding. The active site involves K36. A substrate-binding site is contributed by S40. Residues D45, 106–109, and 167–168 contribute to the ATP site; these read EGAG and NC. Residues D45 and E106 each contribute to the Mg(2+) site.

Belongs to the dethiobiotin synthetase family. Homodimer. Mg(2+) serves as cofactor.

It is found in the cytoplasm. The enzyme catalyses (7R,8S)-7,8-diammoniononanoate + CO2 + ATP = (4R,5S)-dethiobiotin + ADP + phosphate + 3 H(+). The protein operates within cofactor biosynthesis; biotin biosynthesis; biotin from 7,8-diaminononanoate: step 1/2. Functionally, catalyzes a mechanistically unusual reaction, the ATP-dependent insertion of CO2 between the N7 and N8 nitrogen atoms of 7,8-diaminopelargonic acid (DAPA, also called 7,8-diammoniononanoate) to form a ureido ring. This Methanococcus aeolicus (strain ATCC BAA-1280 / DSM 17508 / OCM 812 / Nankai-3) protein is ATP-dependent dethiobiotin synthetase BioD.